The following is a 618-amino-acid chain: Ubiquitin carboxyl-terminal hydrolase 2 (618 aa).

The interval 1–213 (MSQLSSTLKR…RSEYLTDYLE (213 aa)) is necessary for interaction with MDM4. Disordered regions lie at residues 54 to 112 (VSPT…GGSG) and 246 to 274 (RYTL…MNSK). A compositionally biased stretch (basic and acidic residues) spans 90–100 (KRSESQTRGNE). Residues 255–274 (GQASGPSRSTSPGRDTMNSK) show a composition bias toward polar residues. The USP domain maps to 280-612 (AGLRNLGNTC…DAYLLFYELA (333 aa)). The active-site Nucleophile is Cys289. Residues 416 to 516 (YLEREDSRIG…FPKILVLHLK (101 aa)) are necessary for interaction with MDM4. Positions 438, 441, 489, and 492 each coordinate Zn(2+). His570 (proton acceptor) is an active-site residue.

This sequence belongs to the peptidase C19 family. USP2 subfamily. Homooligomer. Found in trimeric complex with MDM2 and MDM4 and USP2. Interacts with CCND1; the interaction is direct and promotes its stabilization by antagonizing ubiquitin-dependent degradation. Interacts (via N-terminus and C-terminus) with MDM2. Interacts with MDM4. Interacts with PER1. Interacts with KCNQ1; counteracts the NEDD4L-specific down-regulation of I(Ks) and restores plasma membrane localization of KCNQ1. Isoform 4: Interacts with NHERF4 and CLTC. In terms of tissue distribution, expressed in mesangial cells of the kidney. Isoform 1 and isoform 2 are expressed in elongated spermatids; the shorter form appearing earlier than the longer form (at protein level). Isoform 1 and isoform 2 are expressed in early round spermatids of the testis. Isoform 1 is expressed in muscle and heart. Isoform 2 is expressed in muscle, lung, heart, brain, liver and ovary. During muscle differentiation, isoform 1 expression increases before the onset of membrane fusion and decreases as the myogenic processes proceeded; un counterpart, isoform 2 expression remains low until the burst of membrane fusion but increases thereafter.

The protein resides in the cytoplasm. It localises to the perinuclear region. The protein localises to the nucleus. Its subcellular location is the membrane. It catalyses the reaction Thiol-dependent hydrolysis of ester, thioester, amide, peptide and isopeptide bonds formed by the C-terminal Gly of ubiquitin (a 76-residue protein attached to proteins as an intracellular targeting signal).. With respect to regulation, cleavage is inhibited by ubiquitin in a dosage-dependent manner. Cleavage is blocked by ubiquitin aldehyde. In terms of biological role, hydrolase that deubiquitinates polyubiquitinated target proteins such as MDM2, MDM4 and CCND1. Isoform 1 and isoform 2 possess both ubiquitin-specific peptidase and isopeptidase activities. Deubiquitinates MDM2 without reversing MDM2-mediated p53/TP53 ubiquitination and thus indirectly promotes p53/TP53 degradation and limits p53 activity. Has no deubiquitinase activity against p53/TP53. Prevents MDM2-mediated degradation of MDM4. Plays a role in the G1/S cell-cycle progression in normal and cancer cells. Regulates the circadian clock by modulating its intrinsic circadian rhythm and its capacity to respond to external cues. Associates with clock proteins and deubiquitinates core clock component PER1 but does not affect its overall stability. Regulates the nucleocytoplasmic shuttling and nuclear retention of PER1 and its repressive role on the clock transcription factors CLOCK and BMAL1. Plays a role in the regulation of myogenic differentiation of embryonic muscle cells. Circadian clock output effector that regulates Ca(2+) absorption in the small intestine. Probably functions by regulating protein levels of the membrane scaffold protein NHERF4 in a rhythmic manner, and is therefore likely to control Ca(2+) membrane permeability mediated by the Ca(2+) channel TRPV6 in the intestine. The protein is Ubiquitin carboxyl-terminal hydrolase 2 (Usp2) of Rattus norvegicus (Rat).